The following is a 312-amino-acid chain: Ribonuclease Z (312 aa).

The Zn(2+) site is built by histidine 62, histidine 64, aspartate 66, histidine 67, histidine 144, aspartate 215, and histidine 273. Aspartate 66 (proton acceptor) is an active-site residue.

This sequence belongs to the RNase Z family. As to quaternary structure, homodimer. Zn(2+) serves as cofactor.

The catalysed reaction is Endonucleolytic cleavage of RNA, removing extra 3' nucleotides from tRNA precursor, generating 3' termini of tRNAs. A 3'-hydroxy group is left at the tRNA terminus and a 5'-phosphoryl group is left at the trailer molecule.. Functionally, zinc phosphodiesterase, which displays some tRNA 3'-processing endonuclease activity. Probably involved in tRNA maturation, by removing a 3'-trailer from precursor tRNA. In Prochlorococcus marinus (strain MIT 9312), this protein is Ribonuclease Z.